We begin with the raw amino-acid sequence, 159 residues long: Sumo-conjugating enzyme ubc9 (159 aa).

One can recognise a UBC core domain in the interval Ile-4–Pro-157. Cys-93 serves as the catalytic Glycyl thioester intermediate.

It belongs to the ubiquitin-conjugating enzyme family.

The protein resides in the nucleus. It participates in protein modification; protein sumoylation. Functionally, accepts the ubiquitin-like protein sumo from the E1 complex and catalyzes its covalent attachment to other proteins with the help of an E3 ligase. This is Sumo-conjugating enzyme ubc9 (ubc9) from Dictyostelium discoideum (Social amoeba).